The sequence spans 226 residues: MSNGKIYQKIDLSNVDRKKIKDDHESVVVHNEIKHTKELWTFPRRSDWGTSGVRCYWDHHEFDGTPIYCPVSYRPRQVAKISKNEIKPTCRNQSIVDVSTFTIKENIPKSKDVSNLLEKDLIKITDPYYEVDGVFCSPECCVAWIRNEKTKAGGSMYSDSERLLHSMLGLVQKITPANNFRLLKSYGGNLTIDQFRKNNKCIKYEYYGTTVLISHLFEKKINLSSD.

This sequence belongs to the IIV-6 350L family.

This is an uncharacterized protein from Invertebrate iridescent virus 3 (IIV-3).